Reading from the N-terminus, the 672-residue chain is Acetoacetyl-CoA synthetase (672 aa).

Belongs to the ATP-dependent AMP-binding enzyme family.

The protein localises to the cytoplasm. The protein resides in the cytosol. It carries out the reaction acetoacetate + ATP + CoA = acetoacetyl-CoA + AMP + diphosphate. Functionally, converts acetoacetate to acetoacetyl-CoA in the cytosol. Ketone body-utilizing enzyme, responsible for the synthesis of cholesterol and fatty acids. The polypeptide is Acetoacetyl-CoA synthetase (Aacs) (Mus musculus (Mouse)).